The chain runs to 277 residues: Phosphoenolpyruvate synthase regulatory protein (277 aa).

Position 157–164 (157–164 (GVSRCGKT)) interacts with ADP.

The protein belongs to the pyruvate, phosphate/water dikinase regulatory protein family. PSRP subfamily.

It carries out the reaction [pyruvate, water dikinase] + ADP = [pyruvate, water dikinase]-phosphate + AMP + H(+). It catalyses the reaction [pyruvate, water dikinase]-phosphate + phosphate + H(+) = [pyruvate, water dikinase] + diphosphate. Its function is as follows. Bifunctional serine/threonine kinase and phosphorylase involved in the regulation of the phosphoenolpyruvate synthase (PEPS) by catalyzing its phosphorylation/dephosphorylation. The polypeptide is Phosphoenolpyruvate synthase regulatory protein (Shigella boydii serotype 4 (strain Sb227)).